The sequence spans 396 residues: Formate-dependent phosphoribosylglycinamide formyltransferase (396 aa).

Residues 25–26 (EL) and Glu85 each bind N(1)-(5-phospho-beta-D-ribosyl)glycinamide. ATP contacts are provided by residues Arg117, Lys158, 163-168 (SSGKGQ), 198-201 (EAFI), and Glu206. Residues 122-311 (RLAAETLAIP…EFALHVRAIL (190 aa)) enclose the ATP-grasp domain. Residues Glu270 and Glu282 each coordinate Mg(2+). Residues Asp289, Lys359, and 366–367 (RR) contribute to the N(1)-(5-phospho-beta-D-ribosyl)glycinamide site.

It belongs to the PurK/PurT family. Homodimer.

It carries out the reaction N(1)-(5-phospho-beta-D-ribosyl)glycinamide + formate + ATP = N(2)-formyl-N(1)-(5-phospho-beta-D-ribosyl)glycinamide + ADP + phosphate + H(+). The protein operates within purine metabolism; IMP biosynthesis via de novo pathway; N(2)-formyl-N(1)-(5-phospho-D-ribosyl)glycinamide from N(1)-(5-phospho-D-ribosyl)glycinamide (formate route): step 1/1. Functionally, involved in the de novo purine biosynthesis. Catalyzes the transfer of formate to 5-phospho-ribosyl-glycinamide (GAR), producing 5-phospho-ribosyl-N-formylglycinamide (FGAR). Formate is provided by PurU via hydrolysis of 10-formyl-tetrahydrofolate. The chain is Formate-dependent phosphoribosylglycinamide formyltransferase from Shewanella frigidimarina (strain NCIMB 400).